A 420-amino-acid polypeptide reads, in one-letter code: Histidine--tRNA ligase (420 aa).

It belongs to the class-II aminoacyl-tRNA synthetase family. Homodimer.

It localises to the cytoplasm. The enzyme catalyses tRNA(His) + L-histidine + ATP = L-histidyl-tRNA(His) + AMP + diphosphate + H(+). The polypeptide is Histidine--tRNA ligase (Staphylococcus aureus (strain Mu3 / ATCC 700698)).